A 212-amino-acid chain; its full sequence is MPVHEIRHPLIRHKLGLMRRADISTKNFRELAQEVGALLTYEATKDLPLEQYEIPGWAGPVTVEKISGKKITVVPILRAGIGMLDGVLSLVPGAKVSAVGVARNEETLEARTYLEKLAPDIAERRSLIIDPMLATGGSMVATIDLLKKAGSKEIRAMVLVAAPEGIEAVRQAHPDVIIYTASIDEKLDENGYIIPGLGDAGDKIFGTKQKEA.

5-phospho-alpha-D-ribose 1-diphosphate contacts are provided by residues Arg-78, Arg-103, and 130 to 138; that span reads DPMLATGGS. Uracil contacts are provided by residues Ile-193 and 198–200; that span reads GDA. A 5-phospho-alpha-D-ribose 1-diphosphate-binding site is contributed by Asp-199.

The protein belongs to the UPRTase family. Requires Mg(2+) as cofactor.

The enzyme catalyses UMP + diphosphate = 5-phospho-alpha-D-ribose 1-diphosphate + uracil. It participates in pyrimidine metabolism; UMP biosynthesis via salvage pathway; UMP from uracil: step 1/1. With respect to regulation, allosterically activated by GTP. In terms of biological role, catalyzes the conversion of uracil and 5-phospho-alpha-D-ribose 1-diphosphate (PRPP) to UMP and diphosphate. The protein is Uracil phosphoribosyltransferase of Pseudomonas paraeruginosa (strain DSM 24068 / PA7) (Pseudomonas aeruginosa (strain PA7)).